Consider the following 379-residue polypeptide: S-adenosylmethionine decarboxylase proenzyme (379 aa).

Active-site residues include Glu30 and Glu33. Residue Ser96 is the Schiff-base intermediate with substrate; via pyruvic acid of the active site. Ser96 is modified (pyruvic acid (Ser); by autocatalysis). Cys110 acts as the Proton donor; for catalytic activity in catalysis. Catalysis depends on proton acceptor; for processing activity residues Ser254 and His267.

It belongs to the eukaryotic AdoMetDC family. In terms of assembly, heterotetramer of two alpha and two beta chains. It depends on pyruvate as a cofactor. Post-translationally, is synthesized initially as an inactive proenzyme. Formation of the active enzyme involves a self-maturation process in which the active site pyruvoyl group is generated from an internal serine residue via an autocatalytic post-translational modification. Two non-identical subunits are generated from the proenzyme in this reaction, and the pyruvate is formed at the N-terminus of the alpha chain, which is derived from the carboxyl end of the proenzyme. The post-translation cleavage follows an unusual pathway, termed non-hydrolytic serinolysis, in which the side chain hydroxyl group of the serine supplies its oxygen atom to form the C-terminus of the beta chain, while the remainder of the serine residue undergoes an oxidative deamination to produce ammonia and the pyruvoyl group blocking the N-terminus of the alpha chain.

It catalyses the reaction S-adenosyl-L-methionine + H(+) = S-adenosyl 3-(methylsulfanyl)propylamine + CO2. It participates in amine and polyamine biosynthesis; S-adenosylmethioninamine biosynthesis; S-adenosylmethioninamine from S-adenosyl-L-methionine: step 1/1. S-adenosylmethionine decarboxylase is essential for the biosynthesis of spermine and spermidine. The alpha subunit contains the active site. This is S-adenosylmethionine decarboxylase proenzyme (amd1) from Dictyostelium discoideum (Social amoeba).